We begin with the raw amino-acid sequence, 252 residues long: Probable transcriptional regulatory protein Bcav_1989 (252 aa).

Belongs to the TACO1 family.

It localises to the cytoplasm. The protein is Probable transcriptional regulatory protein Bcav_1989 of Beutenbergia cavernae (strain ATCC BAA-8 / DSM 12333 / CCUG 43141 / JCM 11478 / NBRC 16432 / NCIMB 13614 / HKI 0122).